The sequence spans 134 residues: Holo-[acyl-carrier-protein] synthase (134 aa).

Residues aspartate 8 and glutamate 58 each contribute to the Mg(2+) site.

It belongs to the P-Pant transferase superfamily. AcpS family. Mg(2+) is required as a cofactor.

The protein localises to the cytoplasm. It catalyses the reaction apo-[ACP] + CoA = holo-[ACP] + adenosine 3',5'-bisphosphate + H(+). Its function is as follows. Transfers the 4'-phosphopantetheine moiety from coenzyme A to a Ser of acyl-carrier-protein. This chain is Holo-[acyl-carrier-protein] synthase, found in Acidiphilium cryptum (strain JF-5).